The following is a 230-amino-acid chain: Ropporin-1-like protein (230 aa).

Residues 17-54 (PELPDILKQFTKAAIRTQPADVLQWSAGYFSALSRGDP) enclose the RIIa domain.

The protein belongs to the ropporin family. As to quaternary structure, component of the axonemal radial spoke complex 1 (RS1), at least composed of spoke head proteins RSPH1, RSPH3, RSPH9 and the cilia-specific component RSPH4A or sperm-specific component RSPH6A, spoke stalk proteins RSPH14, DNAJB13, DYDC1, ROPN1L and NME5, and the anchor protein IQUB. May interact with AKAP3. Interacts with FSCB; the interaction increases upon spermatozoa capacitation conditions. Interacts with CFAP61. Sumoylated, sumoylation decreases upon spermatozoa capacitation conditions.

The protein resides in the cell projection. The protein localises to the cilium. It localises to the flagellum. Functionally, functions as part of axonemal radial spoke complexes that play an important part in the motility of sperm and cilia. Important for male fertility. With ROPN1, involved in fibrous sheath integrity and sperm motility, plays a role in PKA-dependent signaling processes required for spermatozoa capacitation. The polypeptide is Ropporin-1-like protein (ROPN1L) (Macaca fascicularis (Crab-eating macaque)).